A 408-amino-acid chain; its full sequence is Na(+)/H(+) antiporter NhaA (408 aa).

Helical transmembrane passes span 42-62 (LMFV…PVYF), 69-89 (VLGL…FFLL), 110-130 (ALPG…FIAV), 140-160 (GWAI…SLLG), 169-189 (IFLT…IALF), 192-212 (AELT…LAAL), 215-235 (FGVK…FFVL), 238-258 (GIHA…QAST), 277-297 (VAFL…FAGL), 312-332 (LGLF…AIWL), 346-366 (LYGV…IGLL), and 380-400 (IGVL…LRVT).

The protein belongs to the NhaA Na(+)/H(+) (TC 2.A.33) antiporter family.

It is found in the cell inner membrane. The enzyme catalyses Na(+)(in) + 2 H(+)(out) = Na(+)(out) + 2 H(+)(in). Functionally, na(+)/H(+) antiporter that extrudes sodium in exchange for external protons. The protein is Na(+)/H(+) antiporter NhaA of Nitrobacter hamburgensis (strain DSM 10229 / NCIMB 13809 / X14).